The chain runs to 101 residues: Apolipoprotein C-II (101 aa).

Residues 1 to 22 form the signal peptide; it reads MGTRCLLVLLLVLLVLKCEVQG. The propeptide at 23-28 is removed in mature form; that stretch reads DDMARQ. Residues 66–74 are lipid binding; sequence AMDEKIRDM. Residues 78–101 form a lipoprotein lipase cofactor region; it reads STAAVRIYTGILTDQILSMLTGDP.

Belongs to the apolipoprotein C2 family. Proapolipoprotein C-II is synthesized as a sialic acid containing glycoprotein which is subsequently desialylated prior to its proteolytic processing. In terms of processing, proapolipoprotein C-II, the major form found in plasma undergoes proteolytic cleavage of its N-terminal hexapeptide to generate the mature form apolipoprotein C-II, which occurs as the minor form in plasma.

It localises to the secreted. Functionally, component of chylomicrons, very low-density lipoproteins (VLDL), low-density lipoproteins (LDL), and high-density lipoproteins (HDL) in plasma. Plays an important role in lipoprotein metabolism as an activator of lipoprotein lipase, the enzyme which hydrolyzes the triacylglycerols on chylomicrons and VLDL. This is Apolipoprotein C-II (APOC2) from Panthera tigris altaica (Siberian tiger).